The chain runs to 148 residues: uncharacterized protein (148 aa).

Low complexity predominate over residues 36 to 45 (PGAPSAGPMS). The disordered stretch occupies residues 36-148 (PGAPSAGPMS…SGTAFFPGTT (113 aa)). Positions 46–55 (DSNSKGSTPR) are enriched in polar residues.

This is an uncharacterized protein from Bovine leukemia virus (isolate Japanese BLV-1) (BLV).